Here is a 747-residue protein sequence, read N- to C-terminus: H(+)/Cl(-) exchange transporter 4 (747 aa).

The segment at methionine 1–serine 50 is required for localization in the endoplasmic reticulum. Topologically, residues methionine 1–alanine 54 are cytoplasmic. The next 2 membrane-spanning stretches (helical) occupy residues tryptophan 55–serine 92 and leucine 138–phenylalanine 161. The Selectivity filter part_1 signature appears at glycine 167–proline 171. Serine 168 lines the chloride pocket. The helical intramembrane region spans isoleucine 170–leucine 177. The next 2 helical transmembrane spans lie at glycine 187–glycine 205 and glutamate 211–serine 230. Positions glycine 209–proline 213 match the Selectivity filter part_2 motif. 2 intramembrane regions (helical) span residues valine 242–alanine 254 and proline 258–leucine 266. The next 5 membrane-spanning stretches (helical) occupy residues leucine 278–asparagine 296, phenylalanine 320–arginine 345, leucine 352–tyrosine 372, methionine 429–methionine 449, and glycine 454–glycine 473. Residues glycine 454 to proline 458 carry the Selectivity filter part_3 motif. A chloride-binding site is contributed by phenylalanine 456. 2 intramembrane regions (helical) span residues glycine 501–valine 515 and threonine 519–threonine 530. Positions glycine 531 to glutamate 534 form an intramembrane region, note=Loop between two helices. A helical transmembrane segment spans residues tyrosine 535–phenylalanine 553. Residues glycine 554–asparagine 747 lie on the Cytoplasmic side of the membrane. Chloride is bound at residue tyrosine 559. A CBS 1 domain is found at methionine 587 to glutamate 653. Residues serine 597 and tyrosine 618–glycine 620 each bind ATP. Residues glycine 654–isoleucine 683 form a required for localization in the endoplasmic reticulum region. The region spanning leucine 684 to glutamate 742 is the CBS 2 domain. Threonine 725 to aspartate 728 lines the ATP pocket.

This sequence belongs to the chloride channel (TC 2.A.49) family. ClC-4/CLCN4 subfamily. Strongly expressed in liver and brain, but also in heart, muscle, kidney and spleen.

The protein resides in the early endosome membrane. Its subcellular location is the late endosome membrane. The protein localises to the endoplasmic reticulum membrane. It is found in the lysosome membrane. It localises to the recycling endosome membrane. In terms of biological role, strongly outwardly rectifying, electrogenic H(+)/Cl(-)exchanger which mediates the exchange of chloride ions against protons. The CLC channel family contains both chloride channels and proton-coupled anion transporters that exchange chloride or another anion for protons. The presence of conserved gating glutamate residues is typical for family members that function as antiporters. In Rattus norvegicus (Rat), this protein is H(+)/Cl(-) exchange transporter 4 (Clcn4).